The primary structure comprises 27 residues: Potassium channel toxin kappa-KTx 2.2 (27 aa).

2 disulfides stabilise this stretch: cysteine 3-cysteine 21 and cysteine 7-cysteine 17.

This sequence belongs to the short scorpion toxin superfamily. Potassium channel inhibitor kappa-KTx family. Kappa-KTx 2 subfamily. As to expression, expressed by the venom gland.

It localises to the secreted. Functionally, omTx1 decreases the amplitude of the potassium current of the rat channels Kv1.1/KCNA1 by 17% and Kv1.2/KCNA2 by 12% as well as human Kv1.3/KCNA3 by 24%. Its function is as follows. OmTx2 decreases the amplitude of the potassium current of the rat channels Kv1.1/KCNA1 by 8% and Kv1.2/KCNA2 by 10% as well as human Kv1.3/KCNA3 by 36%. Also alters glucose-induced insulin release from pancreatic islets. This is Potassium channel toxin kappa-KTx 2.2 from Opisthacanthus madagascariensis (Scorpion).